A 141-amino-acid polypeptide reads, in one-letter code: Sporulation-specific cell division protein SsgB (141 aa).

The protein belongs to the SsgA family. Interacts with SsgA. Interacts with FtsZ (via N-terminus).

The protein localises to the cell septum. Involved in sporulation-specific cell division. Required for early stages of sporulation. Important in the process of growth cessation prior to sporulation-specific cell division. Recruits cell division protein FtsZ to the future septum sites and tethers the contractile ring structure (Z ring) to the cytoplasmic membrane during sporulation. Stimulates polymerization and filament length of FtsZ in vitro. This Saccharopolyspora erythraea (strain ATCC 11635 / DSM 40517 / JCM 4748 / NBRC 13426 / NCIMB 8594 / NRRL 2338) protein is Sporulation-specific cell division protein SsgB.